Here is a 191-residue protein sequence, read N- to C-terminus: Fe/S biogenesis protein NfuA (191 aa).

[4Fe-4S] cluster contacts are provided by cysteine 149 and cysteine 152.

It belongs to the NfuA family. As to quaternary structure, homodimer. [4Fe-4S] cluster serves as cofactor.

In terms of biological role, involved in iron-sulfur cluster biogenesis. Binds a 4Fe-4S cluster, can transfer this cluster to apoproteins, and thereby intervenes in the maturation of Fe/S proteins. Could also act as a scaffold/chaperone for damaged Fe/S proteins. This is Fe/S biogenesis protein NfuA from Pseudoalteromonas translucida (strain TAC 125).